The following is a 195-amino-acid chain: MYVLFEGIDGVGKSTQIEILASKFSDAIVTKEPGGTQLGVNLREILLRSSIKIGKRAEILLFLADRAEHFEKLVAPNLGKLILSDRGFISGIAYALANDENLDENVLLELNKFALNDKFADKIIFFEASRELISSRLKARGTSDKIEARGLEYLLKVQSLMKQILIKNGFETLFIDASKSIELISKEIENFINFK.

7 to 14 (GIDGVGKS) lines the ATP pocket.

This sequence belongs to the thymidylate kinase family.

It carries out the reaction dTMP + ATP = dTDP + ADP. Phosphorylation of dTMP to form dTDP in both de novo and salvage pathways of dTTP synthesis. This chain is Thymidylate kinase, found in Campylobacter concisus (strain 13826).